Consider the following 278-residue polypeptide: E3 ubiquitin-protein ligase MARCHF5 (278 aa).

Residues 6 to 75 form an RING-CH-type zinc finger; that stretch reads LQQMLDRSCW…PQCNAEYLIV (70 aa). 8 residues coordinate Zn(2+): Cys14, Cys17, Cys33, Cys35, His43, Cys46, Cys65, and Cys68. Transmembrane regions (helical) follow at residues 99–119, 139–159, 209–229, and 238–258; these read FAAA…YGAV, PLFL…GKMI, ILCG…LMFS, and TILG…YFKQ.

In terms of assembly, monomer and homodimer. Interacts with MFN1, MFN2, DNM1L and FIS1. Autoubiquitinated leading to degradation (short half-life).

It is found in the mitochondrion outer membrane. The enzyme catalyses S-ubiquitinyl-[E2 ubiquitin-conjugating enzyme]-L-cysteine + [acceptor protein]-L-lysine = [E2 ubiquitin-conjugating enzyme]-L-cysteine + N(6)-ubiquitinyl-[acceptor protein]-L-lysine.. Its pathway is protein modification; protein ubiquitination. Its function is as follows. Mitochondrial E3 ubiquitin-protein ligase that plays a crucial role in the control of mitochondrial morphology by acting as a positive regulator of mitochondrial fission and as an important regulator of immune response. Plays a crucial role in maintaining mitochondrial homeostasis by regulating the dynamics of mitochondria through the ubiquitination of key proteins involved in fission and fusion such as FIS1, DNM1L and MFN1. Acts as a critical determinant of mitotic apoptosis through both MCL1-dependent and -independent pathways. Turns off persistent immune signaling by degrading oligomeric complexes of retinoic acid-inducible gene I/DDX58 and mitochondrial antiviral-signaling protein/MAVS formed upon RNA virus infection. Promotes STING-mediated type-I interferon production via 'Lys-63'-linked ubiquitination of STING1 thereby preserving its activity and preventing the formation of inactive STING1 polymers. Plays also an essential role in the formation of PEX3-containing vesicles in the de novo biogenesis of peroxisomes from mitochondria. Acts as a regulator of NLRP3 inflammasome activation on the mitochondria by mediating the 'Lys-27'-linked polyubiquitination of NLRP3, positively regulating the NLRP3-NEK7 complex formation and NLRP3 oligomerization. The polypeptide is E3 ubiquitin-protein ligase MARCHF5 (MARCHF5) (Bos taurus (Bovine)).